Here is a 585-residue protein sequence, read N- to C-terminus: Glutamate decarboxylase 2 (585 aa).

Positions 1–24 (MASPGSGFWSFGSEDGSGDPENSG) are disordered. Phosphoserine occurs at positions 3, 6, 10, and 13. S-palmitoyl cysteine attachment occurs at residues Cys30 and Cys45. 181-183 (QLS) is a substrate binding site. At Lys396 the chain carries N6-(pyridoxal phosphate)lysine. Residue Arg558 participates in substrate binding.

This sequence belongs to the group II decarboxylase family. In terms of assembly, homodimer. The cofactor is pyridoxal 5'-phosphate. Post-translationally, phosphorylated; which does not affect kinetic parameters or subcellular location. In terms of processing, palmitoylated; which is required for presynaptic clustering.

The protein resides in the cytoplasm. It is found in the cytosol. The protein localises to the cytoplasmic vesicle. Its subcellular location is the presynaptic cell membrane. It localises to the golgi apparatus membrane. The catalysed reaction is L-glutamate + H(+) = 4-aminobutanoate + CO2. Its function is as follows. Catalyzes the production of GABA. This is Glutamate decarboxylase 2 (GAD2) from Sus scrofa (Pig).